A 595-amino-acid polypeptide reads, in one-letter code: Putative capsid protein V20 (595 aa).

The protein resides in the virion. Its function is as follows. May self assemble to form an icosahedral capsid. Most abundant protein in the virion. The protein is Putative capsid protein V20 of Sputnik virophage.